Consider the following 1222-residue polypeptide: ATP-dependent helicase/nuclease subunit A (1222 aa).

The UvrD-like helicase ATP-binding domain occupies His-27–Gly-483. Residue Ala-48–Asn-55 participates in ATP binding. The UvrD-like helicase C-terminal domain maps to Glu-512 to Gln-798.

It belongs to the helicase family. AddA subfamily. Heterodimer of AddA and AddB/RexB. It depends on Mg(2+) as a cofactor.

It catalyses the reaction Couples ATP hydrolysis with the unwinding of duplex DNA by translocating in the 3'-5' direction.. The enzyme catalyses ATP + H2O = ADP + phosphate + H(+). In terms of biological role, the heterodimer acts as both an ATP-dependent DNA helicase and an ATP-dependent, dual-direction single-stranded exonuclease. Recognizes the chi site generating a DNA molecule suitable for the initiation of homologous recombination. The AddA nuclease domain is required for chi fragment generation; this subunit has the helicase and 3' -&gt; 5' nuclease activities. The polypeptide is ATP-dependent helicase/nuclease subunit A (Streptococcus pyogenes serotype M1).